We begin with the raw amino-acid sequence, 151 residues long: Potassium/proton antiporter CemA (151 aa).

2 helical membrane-spanning segments follow: residues 7–27 (LPSLLYLVFIVLLPWGVSSSF) and 107–127 (ILHFSTNIICLAILSGSFFLG).

This sequence belongs to the CemA family.

The protein resides in the plastid. It is found in the chloroplast inner membrane. It catalyses the reaction K(+)(in) + H(+)(out) = K(+)(out) + H(+)(in). Its function is as follows. Contributes to K(+)/H(+) antiport activity by supporting proton efflux to control proton extrusion and homeostasis in chloroplasts in a light-dependent manner to modulate photosynthesis. Prevents excessive induction of non-photochemical quenching (NPQ) under continuous-light conditions. Indirectly promotes efficient inorganic carbon uptake into chloroplasts. This is Potassium/proton antiporter CemA from Aegilops crassa (Persian goatgrass).